The sequence spans 458 residues: NADH-quinone oxidoreductase subunit N (458 aa).

A run of 14 helical transmembrane segments spans residues 2 to 22, 30 to 50, 62 to 82, 94 to 114, 118 to 138, 153 to 173, 194 to 214, 235 to 255, 261 to 281, 290 to 310, 318 to 338, 361 to 381, 397 to 417, and 438 to 458; these read LLLL…FFAV, IISN…FKYS, GINI…SMII, LKFE…VAIS, FLLL…LAGF, FILG…IYGF, LGLI…LSSV, FNAA…KLII, INYN…AFGA, LMAY…LLHN, LLYM…LIIL, IAAV…LTGF, FALA…YLKV, and LLLI…IISF.

The protein belongs to the complex I subunit 2 family. In terms of assembly, NDH-1 is composed of 14 different subunits. Subunits NuoA, H, J, K, L, M, N constitute the membrane sector of the complex.

The protein localises to the cell inner membrane. It catalyses the reaction a quinone + NADH + 5 H(+)(in) = a quinol + NAD(+) + 4 H(+)(out). In terms of biological role, NDH-1 shuttles electrons from NADH, via FMN and iron-sulfur (Fe-S) centers, to quinones in the respiratory chain. The immediate electron acceptor for the enzyme in this species is believed to be ubiquinone. Couples the redox reaction to proton translocation (for every two electrons transferred, four hydrogen ions are translocated across the cytoplasmic membrane), and thus conserves the redox energy in a proton gradient. The protein is NADH-quinone oxidoreductase subunit N of Rickettsia conorii (strain ATCC VR-613 / Malish 7).